Consider the following 520-residue polypeptide: D-aminopeptidase (520 aa).

Ser62 functions as the Nucleophile in the catalytic mechanism. Catalysis depends on Lys65, which acts as the Proton donor/acceptor. The important for specificity stretch occupies residues 477–487; sequence QRSMDAPSPGE. Residue Asp481 coordinates substrate.

This sequence belongs to the peptidase S12 family. As to quaternary structure, homodimer.

It carries out the reaction Release of an N-terminal D-amino acid from a peptide, Xaa-|-Yaa-, in which Xaa is preferably D-Ala, D-Ser or D-Thr. D-amino acid amides and methyl esters also are hydrolyzed, as is glycine amide.. Its activity is regulated as follows. Inhibited by beta-lactam compounds such as 6-aminopenicillic acid, 7-aminocephalosporanic acid, benzylpenicillin and ampicillin. Inhibited by p-chloromercuribenzoate. Hydrolyzes N-terminal residues in D-amino acid-containing peptides. In Brucella anthropi (strain ATCC 49188 / DSM 6882 / CCUG 24695 / JCM 21032 / LMG 3331 / NBRC 15819 / NCTC 12168 / Alc 37) (Ochrobactrum anthropi), this protein is D-aminopeptidase.